We begin with the raw amino-acid sequence, 263 residues long: N-acetylgalactosamine permease IID component (263 aa).

The region spanning 3–263 (SEISKKDITR…SIVCSAFGIL (261 aa)) is the PTS EIID domain. The next 6 membrane-spanning stretches (helical) occupy residues 61–81 (LEFI…LISM), 98–118 (LFGP…LPIM), 131–151 (LLGP…RVGW), 178–198 (TILG…INVV), 215–235 (FFDK…MYYF), and 243–263 (PVLL…FGIL).

The protein resides in the cell inner membrane. Its function is as follows. The phosphoenolpyruvate-dependent sugar phosphotransferase system (PTS), a major carbohydrate active -transport system, catalyzes the phosphorylation of incoming sugar substrates concomitant with their translocation across the cell membrane. This system is involved in N-acetylgalactosamine transport. This is N-acetylgalactosamine permease IID component (agaD) from Escherichia coli (strain K12).